The sequence spans 304 residues: GTP cyclohydrolase FolE2 (304 aa).

It belongs to the GTP cyclohydrolase IV family.

The enzyme catalyses GTP + H2O = 7,8-dihydroneopterin 3'-triphosphate + formate + H(+). It participates in cofactor biosynthesis; 7,8-dihydroneopterin triphosphate biosynthesis; 7,8-dihydroneopterin triphosphate from GTP: step 1/1. Its function is as follows. Converts GTP to 7,8-dihydroneopterin triphosphate. This is GTP cyclohydrolase FolE2 from Hahella chejuensis (strain KCTC 2396).